Consider the following 704-residue polypeptide: DNA-binding protein RFX2 (704 aa).

The disordered stretch occupies residues 1–39; sequence MQNSEGGADSPASVALRPSAAAPPVPASPQRVLVQAASS. Positions 10-20 are enriched in low complexity; the sequence is SPASVALRPSA. Ser-28 is modified (phosphoserine). A DNA-binding region (RFX-type winged-helix) is located at residues 199 to 274; that stretch reads HLQWLLDNYE…YHYYGIRLKP (76 aa). The interval 292–334 is disordered; the sequence is QQPMHQKPRYRPAQKTDSLGDSSSHSGLHSTPEQTTAAQNQHH. The segment covering 307–334 has biased composition (low complexity); it reads TDSLGDSSSHSGLHSTPEQTTAAQNQHH. At Ser-416 the chain carries Phosphoserine.

The protein belongs to the RFX family. As to quaternary structure, homodimer; probably only forms homodimers in testis. Heterodimer; heterodimerizes with RFX1 and RFX3.

The protein resides in the nucleus. It is found in the cytoplasm. In terms of biological role, transcription factor that acts as a key regulator of spermatogenesis. Acts by regulating expression of genes required for the haploid phase during spermiogenesis, such as genes required for cilium assembly and function. Recognizes and binds the X-box, a regulatory motif with DNA sequence 5'-GTNRCC(0-3N)RGYAAC-3' present on promoters. Probably activates transcription of the testis-specific histone gene H1-6. This chain is DNA-binding protein RFX2 (RFX2), found in Pongo abelii (Sumatran orangutan).